The chain runs to 525 residues: GMP synthase [glutamine-hydrolyzing] (525 aa).

The region spanning 9 to 207 is the Glutamine amidotransferase type-1 domain; sequence RILILDFGSQ…VHEICGCPAD (199 aa). C86 functions as the Nucleophile in the catalytic mechanism. Residues H181 and E183 contribute to the active site. Residues 208 to 400 form the GMPS ATP-PPase domain; sequence WTPGNIVDDL…LGLPADMVYR (193 aa). An ATP-binding site is contributed by 235-241; it reads SGGVDSS.

As to quaternary structure, homodimer.

The catalysed reaction is XMP + L-glutamine + ATP + H2O = GMP + L-glutamate + AMP + diphosphate + 2 H(+). The protein operates within purine metabolism; GMP biosynthesis; GMP from XMP (L-Gln route): step 1/1. Functionally, catalyzes the synthesis of GMP from XMP. The sequence is that of GMP synthase [glutamine-hydrolyzing] from Alkalilimnicola ehrlichii (strain ATCC BAA-1101 / DSM 17681 / MLHE-1).